We begin with the raw amino-acid sequence, 90 residues long: Small ribosomal subunit protein bS18B (90 aa).

This sequence belongs to the bacterial ribosomal protein bS18 family. As to quaternary structure, part of the 30S ribosomal subunit. Forms a tight heterodimer with protein bS6.

In terms of biological role, binds as a heterodimer with protein bS6 to the central domain of the 16S rRNA, where it helps stabilize the platform of the 30S subunit. The chain is Small ribosomal subunit protein bS18B from Roseiflexus sp. (strain RS-1).